A 387-amino-acid polypeptide reads, in one-letter code: Probable G-protein coupled receptor 173 (387 aa).

The Extracellular segment spans residues 1-40; it reads MANGNASSDGPGNPLAAVVSTTGGVMGGAPSSAVSTYVKL. Asn-5 carries an N-linked (GlcNAc...) asparagine glycan. The chain crosses the membrane as a helical span at residues 41–61; sequence VLLGLIICISLVGNLVVSLLV. Residues 62 to 87 are Cytoplasmic-facing; the sequence is LRDRALHKAPYYFLLDLCLADTIRSA. Residues 88–108 form a helical membrane-spanning segment; sequence VCFPFVLVSIKNGSAWTYSVL. Topologically, residues 109-111 are extracellular; that stretch reads SCK. A disulfide bond links Cys-110 and Cys-188. Residues 112–132 traverse the membrane as a helical segment; the sequence is VVAFMAVLFCFHAAFMLFCIS. The Cytoplasmic segment spans residues 133-153; that stretch reads VTRYMAIAHHRFYSKRMTFWT. Residues 154-174 traverse the membrane as a helical segment; that stretch reads CVAVVCMVWTLSVAMAFPPVF. The Extracellular segment spans residues 175–202; the sequence is DVGTYKFIREEDQCIFEHRYFKANDTLG. Asn-198 carries N-linked (GlcNAc...) asparagine glycosylation. A helical membrane pass occupies residues 203–223; sequence FMLMLAVLILATHVVYMKLLL. Over 224 to 301 the chain is Cytoplasmic; the sequence is FEYKHRKMKP…FKAEKQLGRM (78 aa). The helical transmembrane segment at 302–322 threads the bilayer; it reads FYVITLFFLVLWSPYIVACYW. At 323-335 the chain is on the extracellular side; it reads RVFVKACTIPHRY. Residues 336–356 form a helical membrane-spanning segment; sequence LSTTVWMSFAQAGVNPIICFF. Topologically, residues 357–387 are cytoplasmic; it reads LNKDLKKGLLAHLPPCCRTPPQLPREPYCVM.

This sequence belongs to the G-protein coupled receptor 1 family.

The protein localises to the cell membrane. Functionally, is a receptor for the SMIM20 derived peptides Phoenixin-14 and Phoenixin-20. It mediates the Phoenixin-14 and Phoenixin-20 augmentation of gonadotropin-releasing hormone (GNRH) signaling in the hypothalamus and pituitary gland. In the ovary, it mediates the effects of Phoenixin-14 and Phoenixin-20 induced granulosa cell proliferation during follicular growth. This is Probable G-protein coupled receptor 173 (gpr173) from Danio rerio (Zebrafish).